We begin with the raw amino-acid sequence, 748 residues long: Acyl-coenzyme A oxidase (748 aa).

The protein belongs to the acyl-CoA oxidase family. As to quaternary structure, homooctamer. FAD serves as cofactor.

It is found in the peroxisome. The catalysed reaction is a 2,3-saturated acyl-CoA + O2 = a (2E)-enoyl-CoA + H2O2. It participates in lipid metabolism; peroxisomal fatty acid beta-oxidation. The protein is Acyl-coenzyme A oxidase (POX1) of Saccharomyces cerevisiae (strain ATCC 204508 / S288c) (Baker's yeast).